The sequence spans 484 residues: tRNA-2-methylthio-N(6)-dimethylallyladenosine synthase (484 aa).

In terms of domain architecture, MTTase N-terminal spans 36–153; that stretch reads GKLYIKTHGC…LPELIRARRE (118 aa). [4Fe-4S] cluster is bound by residues Cys-45, Cys-82, Cys-116, Cys-190, Cys-194, and Cys-197. The Radical SAM core domain maps to 176–415; the sequence is RAEGPSAFVS…HINAHAASIS (240 aa). A TRAM domain is found at 416–479; the sequence is QSMVGSVQRV…SNSLRGRIQL (64 aa). The disordered stretch occupies residues 428 to 450; it reads EGPSRRDPNELTGKSENMRPVNF.

The protein belongs to the methylthiotransferase family. MiaB subfamily. As to quaternary structure, monomer. It depends on [4Fe-4S] cluster as a cofactor.

Its subcellular location is the cytoplasm. It carries out the reaction N(6)-dimethylallyladenosine(37) in tRNA + (sulfur carrier)-SH + AH2 + 2 S-adenosyl-L-methionine = 2-methylsulfanyl-N(6)-dimethylallyladenosine(37) in tRNA + (sulfur carrier)-H + 5'-deoxyadenosine + L-methionine + A + S-adenosyl-L-homocysteine + 2 H(+). Functionally, catalyzes the methylthiolation of N6-(dimethylallyl)adenosine (i(6)A), leading to the formation of 2-methylthio-N6-(dimethylallyl)adenosine (ms(2)i(6)A) at position 37 in tRNAs that read codons beginning with uridine. The chain is tRNA-2-methylthio-N(6)-dimethylallyladenosine synthase from Xanthomonas axonopodis pv. citri (strain 306).